A 570-amino-acid polypeptide reads, in one-letter code: Aspartyl aminopeptidase (570 aa).

H86 serves as a coordination point for Zn(2+). H160 contributes to the substrate binding site. Position 324 (D324) interacts with Zn(2+). E379 lines the substrate pocket. 2 residues coordinate Zn(2+): E380 and D434. The substrate site is built by D434, H437, K462, and Y469. Zn(2+) is bound at residue H534.

This sequence belongs to the peptidase M18 family. In terms of assembly, homododecamer composed of homodimers and homotrimers that assemble into a tetrahedron shape to create a central tunnel containing the active sites. Homooctamer. Requires Zn(2+) as cofactor.

The protein resides in the cytoplasm. It carries out the reaction Release of an N-terminal aspartate or glutamate from a peptide, with a preference for aspartate.. Its activity is regulated as follows. Activated by Co(2+). Inhibited by high concentrations (&gt;1mM) of Zn(2+). Aminopeptidase which specifically catalyzes the removal of glutamic acid or aspartic acid residues from the N-terminus of peptides. May play a role in the final step of host hemoglobin catabolism, by cleaving hemoglobin-derived oligopeptides in the cytoplasm. This Plasmodium falciparum (isolate 3D7) protein is Aspartyl aminopeptidase.